We begin with the raw amino-acid sequence, 210 residues long: Imidazoleglycerol-phosphate dehydratase (210 aa).

Residues 185-210 are disordered; the sequence is PRRGGSIPSSKGVLEQAGDNNTEKSK.

The protein belongs to the imidazoleglycerol-phosphate dehydratase family.

It is found in the cytoplasm. It catalyses the reaction D-erythro-1-(imidazol-4-yl)glycerol 3-phosphate = 3-(imidazol-4-yl)-2-oxopropyl phosphate + H2O. It participates in amino-acid biosynthesis; L-histidine biosynthesis; L-histidine from 5-phospho-alpha-D-ribose 1-diphosphate: step 6/9. This Prochlorococcus marinus (strain SARG / CCMP1375 / SS120) protein is Imidazoleglycerol-phosphate dehydratase.